The chain runs to 150 residues: uncharacterized protein (150 aa).

This is an uncharacterized protein from Aquifex aeolicus (strain VF5).